Here is a 1785-residue protein sequence, read N- to C-terminus: 1,3-beta-glucan synthase component FKS3 (1785 aa).

Helical transmembrane passes span 337–357, 375–395, 415–435, 444–464, 508–528, 547–567, 572–592, and 712–732; these read FWII…PTLY, LSVI…ATVF, IGLL…LGFF, AYIV…FFAV, LWVF…TLSL, YLLG…LMLL, LFFL…SIVL, and LATP…TVLV. Basic and acidic residues-rich tracts occupy residues 791-801 and 815-824; these read ESSHDEDRLEI and DHTESRKLPT. The interval 791 to 824 is disordered; the sequence is ESSHDEDRLEIPDALYDPRSSPLSDHTESRKLPT. 5 N-linked (GlcNAc...) asparagine glycosylation sites follow: N844, N874, N955, N1002, and N1170. The next 3 membrane-spanning stretches (helical) occupy residues 1215–1235, 1268–1288, and 1303–1323; these read LFIS…GALN, VSIF…PLLI, and FLHH…QVYS. A glycan (N-linked (GlcNAc...) asparagine) is linked at N1360. 5 helical membrane passes run 1370–1390, 1394–1414, 1475–1495, 1514–1534, and 1549–1569; these read FFML…WFWI, SMCF…DFFI, FAEL…FSFI, LLVT…LFWV, and AGAV…LLDF. N1579 is a glycosylation site (N-linked (GlcNAc...) asparagine). 3 helical membrane-spanning segments follow: residues 1585–1605, 1655–1675, and 1713–1733; these read ILLI…TTIF, FFLG…PFID, and FSLY…PFFA. N-linked (GlcNAc...) asparagine glycosylation is present at N1761.

The protein belongs to the glycosyltransferase 48 family. Post-translationally, N-glycosylated.

It is found in the mitochondrion. The protein localises to the membrane. The enzyme catalyses [(1-&gt;3)-beta-D-glucosyl](n) + UDP-alpha-D-glucose = [(1-&gt;3)-beta-D-glucosyl](n+1) + UDP + H(+). Required for spore wall assembly. This is 1,3-beta-glucan synthase component FKS3 (FKS3) from Saccharomyces cerevisiae (strain ATCC 204508 / S288c) (Baker's yeast).